A 61-amino-acid polypeptide reads, in one-letter code: Small ribosomal subunit protein uS14B (61 aa).

4 residues coordinate Zn(2+): C24, C27, C40, and C43.

The protein belongs to the universal ribosomal protein uS14 family. Zinc-binding uS14 subfamily. Part of the 30S ribosomal subunit. Contacts proteins S3 and S10. The cofactor is Zn(2+).

Functionally, binds 16S rRNA, required for the assembly of 30S particles and may also be responsible for determining the conformation of the 16S rRNA at the A site. The chain is Small ribosomal subunit protein uS14B from Mycobacteroides abscessus (strain ATCC 19977 / DSM 44196 / CCUG 20993 / CIP 104536 / JCM 13569 / NCTC 13031 / TMC 1543 / L948) (Mycobacterium abscessus).